Reading from the N-terminus, the 116-residue chain is Large ribosomal subunit protein bL17 (116 aa).

It belongs to the bacterial ribosomal protein bL17 family. In terms of assembly, part of the 50S ribosomal subunit. Contacts protein L32.

The chain is Large ribosomal subunit protein bL17 from Synechococcus sp. (strain CC9902).